A 328-amino-acid chain; its full sequence is DNA-directed RNA polymerase subunit alpha (328 aa).

Positions 1-231 are alpha N-terminal domain (alpha-NTD); sequence MIQQMQMPEK…DHVRLFSLFS (231 aa). The interval 252 to 328 is alpha C-terminal domain (alpha-CTD); it reads MRKLLMTRIE…MEVTKYRLNQ (77 aa).

The protein belongs to the RNA polymerase alpha chain family. Homodimer. The RNAP catalytic core consists of 2 alpha, 1 beta, 1 beta' and 1 omega subunit. When a sigma factor is associated with the core the holoenzyme is formed, which can initiate transcription.

It catalyses the reaction RNA(n) + a ribonucleoside 5'-triphosphate = RNA(n+1) + diphosphate. Its function is as follows. DNA-dependent RNA polymerase catalyzes the transcription of DNA into RNA using the four ribonucleoside triphosphates as substrates. The protein is DNA-directed RNA polymerase subunit alpha of Chloroherpeton thalassium (strain ATCC 35110 / GB-78).